Reading from the N-terminus, the 1073-residue chain is Pharyngeal muscle protein 2 (1073 aa).

The 35-residue stretch at 9–43 (INDLRVSELKTELEKRGLSTQGVKVVLTVRLNKAL) folds into the SAP domain. Disordered stretches follow at residues 59 to 186 (VSPM…PEVV), 207 to 305 (ELKE…SMET), and 337 to 388 (LLED…KSML). Positions 91–111 (EGNDENVLVEEKEEEEEEEDS) are enriched in acidic residues. The span at 112–127 (HDLQIIEDHELEVPSD) shows a compositional bias: basic and acidic residues. Residues 128 to 151 (EKDDTLVEDEEFEEAEQVEPEPEA) show a composition bias toward acidic residues. 2 stretches are compositionally biased toward basic and acidic residues: residues 156 to 182 (VEEKPEEKLEEKPEEKLEEKPEEKPVE) and 207 to 217 (ELKEKPEKEPE). 2 stretches are compositionally biased toward acidic residues: residues 223 to 232 (EPVEQLENEP) and 248 to 265 (QDGEDEFEEDDSSSDIEI). The segment covering 277-293 (AEEKVEKKEKKPEEIPH) has biased composition (basic and acidic residues). Residues 366-386 (ASTPQATPSKAASSSAGSGKS) are compositionally biased toward low complexity. Positions 396-478 (TSIWIRGMTP…RVLRVEKVSE (83 aa)) constitute an RRM domain. 3 disordered regions span residues 481 to 759 (LTSS…ERRR), 845 to 917 (QEHR…RNLV), and 1015 to 1073 (SQNA…RGNY). 2 stretches are compositionally biased toward low complexity: residues 496 to 505 (EAASTMSTSP) and 513 to 524 (PVVTTTTTTSAA). The segment covering 573–587 (ITFDREEESNRDSRR) has biased composition (basic and acidic residues). Residues 588 to 622 (TIAAAPPARTSRMARSPLRAPLRAARGSESSRSST) are compositionally biased toward low complexity. Residues 674–689 (VTVQQDAPRASYQTEQ) are compositionally biased toward polar residues. 2 stretches are compositionally biased toward basic and acidic residues: residues 707-727 (VSPDRSEQRRHRDEPPPRRAP) and 742-759 (PPRRQEGARRSEEPERRR). Composition is skewed to low complexity over residues 901-917 (SSSNSNRNSNSGGRNLV), 1015-1026 (SQNAATPSTSTS), and 1034-1060 (QWQQQSYGSNQHQHHQNNNSSQPSSSN).

As to expression, expressed in most tissues including the hypodermal, muscle, neuronal, vulval and intestinal tissues. Isoform a: Expressed in the pharynx, nerve ring, intestine, neurons and ventral nerve cord.

It localises to the nucleus. Its function is as follows. Involved in pharyngeal muscle development and ensures pharyngeal grinder function during feeding. Plays a role in the defense against the accumulation of ingested live pathogenic bacteria in the intestine. Has a role in the determination of life span. In Caenorhabditis elegans, this protein is Pharyngeal muscle protein 2.